The following is a 302-amino-acid chain: Digeranylgeranylglyceryl phosphate synthase (302 aa).

Transmembrane regions (helical) follow at residues 21–41, 43–63, 103–123, 144–164, 167–187, 218–238, 244–264, and 282–302; these read LVVAALTTLIGYGTVASIYGG, IVSSGYAYAALIVVLVAAGGY, IGLIIALVTCPNFIVFGFAVL, IVIAFNSASTIVFGALYASCM, GKVVLPSVALIPVLYAFLLVL, AYMASVAVLGLVVVLSPFPYI, MAYLILALVVDVLIAYSLAIL, and ARSALKLAFMVGALAFLAGLM.

It belongs to the UbiA prenyltransferase family. DGGGP synthase subfamily. Mg(2+) is required as a cofactor.

The protein localises to the cell membrane. It carries out the reaction sn-3-O-(geranylgeranyl)glycerol 1-phosphate + (2E,6E,10E)-geranylgeranyl diphosphate = 2,3-bis-O-(geranylgeranyl)-sn-glycerol 1-phosphate + diphosphate. It functions in the pathway membrane lipid metabolism; glycerophospholipid metabolism. Prenyltransferase that catalyzes the transfer of the geranylgeranyl moiety of geranylgeranyl diphosphate (GGPP) to the C2 hydroxyl of (S)-3-O-geranylgeranylglyceryl phosphate (GGGP). This reaction is the second ether-bond-formation step in the biosynthesis of archaeal membrane lipids. The sequence is that of Digeranylgeranylglyceryl phosphate synthase from Hyperthermus butylicus (strain DSM 5456 / JCM 9403 / PLM1-5).